Reading from the N-terminus, the 773-residue chain is FT-interacting protein 3 (773 aa).

Basic and acidic residues predominate over residues 1–16; it reads MQRPPPEDFSLKETRP. The interval 1 to 24 is disordered; the sequence is MQRPPPEDFSLKETRPHLGGGKLS. C2 domains lie at 22-142, 181-305, and 345-471; these read KLSG…PQWY, VSGT…SRWY, and YSSD…THSY. 5 residues coordinate Ca(2+): aspartate 55, aspartate 61, aspartate 108, aspartate 110, and aspartate 115. Transmembrane regions (helical) follow at residues 574-594, 608-628, and 716-736; these read IMGVLSGLIAVGKWFEQICNW, IILVLYPELILPTIFLYLFLI, and LFVLFCLIAAVILYVTPFQVV.

It belongs to the MCTP family. As to quaternary structure, interacts with and regulates subcellular localization and trafficking of STM. The cofactor is Ca(2+). Accumulates in vascular tissues, leaf primordia and flowers. Highly expressed in roots meristems and in both vegetative and inflorescence shoot apical meristems (SAMs).

The protein localises to the endoplasmic reticulum membrane. It is found in the cytoplasm. The protein resides in the vesicle. It localises to the cell membrane. Its subcellular location is the endosome membrane. The protein localises to the golgi apparatus membrane. Functionally, required for proliferation and differentiation of shoot stem cells in the shoot apical meristem (SAM), thus determining the appropriate balance between the maintenance of shoot stem cells and their differentiation into other aboveground plant parts via the control of subcellular localization and intercellular trafficking of STM in the shoot apex. Prevents intracellular trafficking of STM to the plasma membrane in cells in the peripheral shoot meristem region thus facilitating STM recycling to the nucleus to maintain stem cells. May function as a signaling molecule by regulating the trafficking of other regulators. The chain is FT-interacting protein 3 from Arabidopsis thaliana (Mouse-ear cress).